A 255-amino-acid chain; its full sequence is uncharacterized protein (255 aa).

This is an uncharacterized protein from Acanthamoeba polyphaga mimivirus (APMV).